Consider the following 336-residue polypeptide: Filaggrin (336 aa).

The disordered stretch occupies residues 1–313 (PDGSGRSSNR…GVQGAAASGQ (313 aa)). Low complexity-rich tracts occupy residues 16-26 (QLSPSQSSDSQ), 40-66 (SSSA…LAAD), and 73-98 (ARQG…SSSA). Composition is skewed to basic and acidic residues over residues 100–120 (RQGR…HSDF), 163–176 (DSQH…EQQR), and 184–195 (HQHEHEQPESGH). Residues 285–311 (AQRGQSSSANRRAGSSSGSGVQGAAAS) show a composition bias toward low complexity.

It belongs to the S100-fused protein family. In terms of processing, filaggrin is initially synthesized as a large, insoluble, highly phosphorylated precursor containing many tandem copies of 248 AA, which are not separated by large linker sequences. During terminal differentiation it is dephosphorylated and proteolytically cleaved. In terms of tissue distribution, expressed in the granular layer of the epidermis (at protein level). Expressed in the epidermis of the ear (at protein level).

The protein resides in the cytoplasmic granule. Aggregates keratin intermediate filaments and promotes disulfide-bond formation among the intermediate filaments during terminal differentiation of mammalian epidermis. The polypeptide is Filaggrin (Flg) (Mus musculus (Mouse)).